Reading from the N-terminus, the 190-residue chain is Iron-sulfur protein (190 aa).

Residues 8–36 (VIIYANPDHCLSCHSCELACAVAHSGGHD) form the 4Fe-4S ferredoxin-type 1 domain. [4Fe-4S] cluster contacts are provided by cysteine 17, cysteine 20, cysteine 23, cysteine 27, cysteine 65, cysteine 68, cysteine 73, cysteine 77, cysteine 96, cysteine 99, cysteine 102, cysteine 106, cysteine 133, cysteine 136, cysteine 150, and cysteine 154. 2 consecutive 4Fe-4S ferredoxin-type domains span residues 87-116 (GQVQIVEQHCIGCKLCVMVCPFGAITVRSE) and 133-164 (CDLCVDWRASTGKTAPACVEACPTKAIRMVDL).

In terms of biological role, the carbon monoxide dehydrogenase (CODH) oxidizes carbon monoxide coupled, via CooF, to the reduction of a hydrogen cation by a hydrogenase (probably CooH). CooF is required in stoichiometric amounts in vitro for anchoring CODH to the membrane as well as for conveying the electrons to the hydrogenase. The sequence is that of Iron-sulfur protein (cooF) from Rhodospirillum rubrum.